Consider the following 492-residue polypeptide: Membrane-bound lytic murein transglycosylase F (492 aa).

The first 18 residues, 1–18 (MKGLFLRIIAIVALLLWA), serve as a signal peptide directing secretion. A non-LT domain region spans residues 19–268 (IDMVFPWQQI…RIEEKYFNHL (250 aa)). Positions 270-492 (QFDYVDTRSY…DTLATTVTTQ (223 aa)) are LT domain. The active site involves E313.

It in the N-terminal section; belongs to the bacterial solute-binding protein 3 family. The protein in the C-terminal section; belongs to the transglycosylase Slt family.

It localises to the cell outer membrane. The enzyme catalyses Exolytic cleavage of the (1-&gt;4)-beta-glycosidic linkage between N-acetylmuramic acid (MurNAc) and N-acetylglucosamine (GlcNAc) residues in peptidoglycan, from either the reducing or the non-reducing ends of the peptidoglycan chains, with concomitant formation of a 1,6-anhydrobond in the MurNAc residue.. In terms of biological role, murein-degrading enzyme that degrades murein glycan strands and insoluble, high-molecular weight murein sacculi, with the concomitant formation of a 1,6-anhydromuramoyl product. Lytic transglycosylases (LTs) play an integral role in the metabolism of the peptidoglycan (PG) sacculus. Their lytic action creates space within the PG sacculus to allow for its expansion as well as for the insertion of various structures such as secretion systems and flagella. The polypeptide is Membrane-bound lytic murein transglycosylase F (Pasteurella multocida (strain Pm70)).